The primary structure comprises 358 residues: MSKTNYSVAVLAGDGIGPEIMAAAEQVLDAVSNKFGFTLNREHHAIGGAAIDKHGKALPQSTVTACENADAILFGAVGGPKWEHLPPDEQPERGSLLPLRKHFGLFCNLRPAQLLPALSTASPLRADISEQGFDILCVRELTGGIYFGEKGRSGEGENESAFDTQRYSRKEIERIARFAFEAAKLRSSHVTSVDKANVLASSVLWREVVTEVSKDYPEVKLDYIYVDNAAMQLVKQPSQFDVLLCDNLFGDILSDECAMITGSMGLLPSASLNQSGFGLYEPAGGSAPDIAGKGVANPIAQILSAALMLRYSLGQDEAARTIEKAVAEAVAAGVGTPDIFPNAGYTTNDVAAAIVARI.

79–92 (GPKWEHLPPDEQPE) serves as a coordination point for NAD(+). Residues Arg100, Arg110, Arg139, and Asp227 each coordinate substrate. Positions 227, 251, and 255 each coordinate Mg(2+). Position 285–297 (285–297 (GSAPDIAGKGVAN)) interacts with NAD(+).

This sequence belongs to the isocitrate and isopropylmalate dehydrogenases family. LeuB type 1 subfamily. As to quaternary structure, homodimer. Mg(2+) is required as a cofactor. It depends on Mn(2+) as a cofactor.

Its subcellular location is the cytoplasm. It carries out the reaction (2R,3S)-3-isopropylmalate + NAD(+) = 4-methyl-2-oxopentanoate + CO2 + NADH. Its pathway is amino-acid biosynthesis; L-leucine biosynthesis; L-leucine from 3-methyl-2-oxobutanoate: step 3/4. Catalyzes the oxidation of 3-carboxy-2-hydroxy-4-methylpentanoate (3-isopropylmalate) to 3-carboxy-4-methyl-2-oxopentanoate. The product decarboxylates to 4-methyl-2 oxopentanoate. This is 3-isopropylmalate dehydrogenase from Pseudoalteromonas translucida (strain TAC 125).